The chain runs to 273 residues: MTRLASRFGAANLIRRDRPLTREELFRVVPSVFSEDKHESRSERYTYIPTISLLDSLQREGFQPFFACQTRVRDPRRREHTKHMLRLRREGQITGKQVPEIILLNSHDGTSSYQMLPGMFRAVCQNGLVCGESFGEVRVPHKGDVVSQVIEGAYEVLGIFERVEEKRDAMQSLLLPPPVQQALAKAALTYRFGEDHQPVTESQILSPRRWQDESNDLWTTYQRIQENLIKGGLSGRNAKGGRTHTRAVRGIDGDVKLNRALWVMAETLLTQLQ.

It belongs to the UPF0380 family.

In Escherichia coli (strain K12), this protein is UPF0380 protein YfjQ (yfjQ).